A 142-amino-acid polypeptide reads, in one-letter code: Large ribosomal subunit protein uL13 (142 aa).

The protein belongs to the universal ribosomal protein uL13 family. In terms of assembly, part of the 50S ribosomal subunit.

Its function is as follows. This protein is one of the early assembly proteins of the 50S ribosomal subunit, although it is not seen to bind rRNA by itself. It is important during the early stages of 50S assembly. In Dictyoglomus thermophilum (strain ATCC 35947 / DSM 3960 / H-6-12), this protein is Large ribosomal subunit protein uL13.